Here is a 328-residue protein sequence, read N- to C-terminus: Transcription initiation factor TFIID subunit 8 (328 aa).

A Histone-fold domain is found at 16–83 (RRILNKVVSQ…DVSLALINMG (68 aa)). Positions 229-309 (NRTEDEPSKD…PGTMPSRSLA (81 aa)) are disordered. 3 positions are modified to phosphoserine: serine 236, serine 245, and serine 255. The segment covering 239 to 251 (DGEEGDSENEEMD) has biased composition (acidic residues). Over residues 252–264 (GDKSKEEKPELDI) the composition is skewed to basic and acidic residues. The span at 296–309 (NCPTPGTMPSRSLA) shows a compositional bias: polar residues.

This sequence belongs to the TAF8 family. Belongs to the TFIID complex which is composed of TATA binding protein (Tbp) and a number of TBP-associated factors (TAFs). Histone fold interacts with N-terminus of Taf10b.

It is found in the nucleus. TFIID is a multimeric protein complex that plays a central role in mediating promoter responses to various activators and repressors. This Drosophila melanogaster (Fruit fly) protein is Transcription initiation factor TFIID subunit 8.